Reading from the N-terminus, the 165-residue chain is Ribosome maturation factor RimM (165 aa).

A PRC barrel domain is found at 94–165; the sequence is EDEFYIADLN…YVILNYQTKV (72 aa).

Belongs to the RimM family. Binds ribosomal protein uS19.

The protein resides in the cytoplasm. An accessory protein needed during the final step in the assembly of 30S ribosomal subunit, possibly for assembly of the head region. Essential for efficient processing of 16S rRNA. May be needed both before and after RbfA during the maturation of 16S rRNA. It has affinity for free ribosomal 30S subunits but not for 70S ribosomes. The protein is Ribosome maturation factor RimM of Rickettsia typhi (strain ATCC VR-144 / Wilmington).